The chain runs to 173 residues: Photosystem I assembly protein Ycf3 (173 aa).

TPR repeat units lie at residues Ala-35 to Thr-68, Gly-72 to Leu-105, and Gly-120 to Asn-153.

This sequence belongs to the Ycf3 family.

It is found in the cellular thylakoid membrane. Its function is as follows. Essential for the assembly of the photosystem I (PSI) complex. May act as a chaperone-like factor to guide the assembly of the PSI subunits. This chain is Photosystem I assembly protein Ycf3, found in Trichormus variabilis (strain ATCC 29413 / PCC 7937) (Anabaena variabilis).